A 69-amino-acid polypeptide reads, in one-letter code: uncharacterized protein (69 aa).

This is an uncharacterized protein from Saccharomyces cerevisiae (strain ATCC 204508 / S288c) (Baker's yeast).